A 114-amino-acid chain; its full sequence is Snake venom vascular endothelial growth factor (114 aa).

Gln-1 carries the pyrrolidone carboxylic acid modification. Cystine bridges form between Cys-14/Cys-56, Cys-45/Cys-91, and Cys-49/Cys-93. The segment at 92 to 114 is disordered; the sequence is ECRPGSTVNNGKRKKNPKEGEPR.

Belongs to the PDGF/VEGF growth factor family. Snake venom VEGF subfamily. In terms of assembly, homodimer; disulfide-linked. Interacts with human VEGF receptor 1/FLT1. Interacts with human VEGF receptor 2/KDR. Expressed by venom gland.

Its subcellular location is the secreted. In terms of biological role, snake venom vascular endothelial growth factor (svVEGF) that may contribute to venom dispersion and prey subjugation by inducing vascular permeability and hypotension. Induces an increase in capillary permeability after intradermal injection, as well as a drastic hypotensive effect after intravenous injection. The hypotension is mediated by nitric oxide (NO), which is produced by VEGF-activated endothelium NO synthase. Induces angiogenesis and migration of human vascular endothelial cells in vitro. Exhibits angiogenic activity by inducing human umbilical vein endothelial cells (HUVEC) to develop vessels in vitro. Induces cellular migration of HUVEC cells towards a wound in scratch assays, enhancing wound closure after 12 h by 49.5%. Induces dose-dependent leukocyte recruitment to the peritoneal cavity leading to increased vascular permeability in mice. The polypeptide is Snake venom vascular endothelial growth factor (Crotalus durissus terrificus (South American rattlesnake)).